Here is a 122-residue protein sequence, read N- to C-terminus: Large ribosomal subunit protein uL14c (122 aa).

Belongs to the universal ribosomal protein uL14 family. In terms of assembly, part of the 50S ribosomal subunit.

It is found in the plastid. The protein localises to the chloroplast. Binds to 23S rRNA. The sequence is that of Large ribosomal subunit protein uL14c from Coffea arabica (Arabian coffee).